The following is a 99-amino-acid chain: DNA-binding protein HU (99 aa).

Positions 67 to 86 (REGRNPKTGAKMKIDAYNQP) are disordered.

It belongs to the bacterial histone-like protein family. In terms of assembly, homodimer.

Functionally, histone-like DNA-binding protein which is capable of wrapping DNA to stabilize it, and thus to prevent its denaturation under extreme environmental conditions. This chain is DNA-binding protein HU (hup), found in Rickettsia conorii (strain ATCC VR-613 / Malish 7).